The chain runs to 212 residues: Interleukin-6 (212 aa).

An N-terminal signal peptide occupies residues 1–27 (MNSFSTSAFGPVAFSLGLLLVLPAAFP). The cysteines at positions 72 and 78 are disulfide-linked. N-linked (GlcNAc...) asparagine glycosylation is present at N73. A Phosphoserine modification is found at S81. An intrachain disulfide couples C101 to C111. N172 is a glycosylation site (N-linked (GlcNAc...) asparagine).

Belongs to the IL-6 superfamily. As to quaternary structure, component of a hexamer of two molecules each of IL6, IL6R and IL6ST; first binds to IL6R to associate with the signaling subunit IL6ST. Interacts with IL6R (via the N-terminal ectodomain); this interaction may be affected by IL6R-binding with SORL1, hence decreasing IL6 cis signaling. Interacts with SORL1 (via the N-terminal ectodomain); this interaction leads to IL6 internalization and lysosomal degradation. May form a trimeric complex with the soluble SORL1 ectodomain and soluble IL6R receptor; this interaction might stabilize circulating IL6, hence promoting IL6 trans signaling.

Its subcellular location is the secreted. In terms of biological role, cytokine with a wide variety of biological functions in immunity, tissue regeneration, and metabolism. Binds to IL6R, then the complex associates to the signaling subunit IL6ST/gp130 to trigger the intracellular IL6-signaling pathway. The interaction with the membrane-bound IL6R and IL6ST stimulates 'classic signaling', whereas the binding of IL6 and soluble IL6R to IL6ST stimulates 'trans-signaling'. Alternatively, 'cluster signaling' occurs when membrane-bound IL6:IL6R complexes on transmitter cells activate IL6ST receptors on neighboring receiver cells. Functionally, IL6 is a potent inducer of the acute phase response. Rapid production of IL6 contributes to host defense during infection and tissue injury, but excessive IL6 synthesis is involved in disease pathology. In the innate immune response, is synthesized by myeloid cells, such as macrophages and dendritic cells, upon recognition of pathogens through toll-like receptors (TLRs) at the site of infection or tissue injury. In the adaptive immune response, is required for the differentiation of B cells into immunoglobulin-secreting cells. Plays a major role in the differentiation of CD4(+) T cell subsets. Essential factor for the development of T follicular helper (Tfh) cells that are required for the induction of germinal-center formation. Required to drive naive CD4(+) T cells to the Th17 lineage. Also required for proliferation of myeloma cells and the survival of plasmablast cells. Acts as an essential factor in bone homeostasis and on vessels directly or indirectly by induction of VEGF, resulting in increased angiogenesis activity and vascular permeability. Induces, through 'trans-signaling' and synergistically with IL1B and TNF, the production of VEGF. Involved in metabolic controls, is discharged into the bloodstream after muscle contraction increasing lipolysis and improving insulin resistance. 'Trans-signaling' in central nervous system also regulates energy and glucose homeostasis. Mediates, through GLP-1, crosstalk between insulin-sensitive tissues, intestinal L cells and pancreatic islets to adapt to changes in insulin demand. Also acts as a myokine. Plays a protective role during liver injury, being required for maintenance of tissue regeneration. Also has a pivotal role in iron metabolism by regulating HAMP/hepcidin expression upon inflammation or bacterial infection. Through activation of IL6ST-YAP-NOTCH pathway, induces inflammation-induced epithelial regeneration. The polypeptide is Interleukin-6 (IL6) (Macaca mulatta (Rhesus macaque)).